Consider the following 255-residue polypeptide: CD320 antigen (255 aa).

The first 29 residues, 1–29 (MNGWVARGLARRAAALGLGLRVLLCFGLC), serve as a signal peptide directing secretion. Over 30–203 (LEIAPTPIQT…SVQSGNRNVY (174 aa)) the chain is Extracellular. 2 LDL-receptor class A domains span residues 52-89 (SCPPTNFQCRSDGRCLPLIWRCDVDQDCPDGSDEEECG) and 120-157 (SCPEGELCCPLDGVCIPSTWLCDGHRDCSDYSDELGCG). 6 disulfide bridges follow: C53–C66, C60–C79, C73–C88, C121–C134, C128–C147, and C141–C156. Residues W71, D74, D76, D78, D84, and E85 each contribute to the Ca(2+) site. Ca(2+) contacts are provided by W139, D142, H144, D146, D152, and E153. N-linked (GlcNAc...) asparagine glycosylation is found at N177 and N183. Residues 204–224 (GIIAAVAVLSISLAAGILFAL) traverse the membrane as a helical segment. Topologically, residues 225–255 (SRLCAQGCLAPLGLLVSMKGSLQPEKKTSVL) are cytoplasmic.

Interacts (via LDL-receptor class A domains) with TCN2.

The protein resides in the cell membrane. Functionally, receptor for transcobalamin saturated with cobalamin (TCbl). Plays an important role in cobalamin uptake. Plasma membrane protein that is expressed on follicular dendritic cells (FDC) and mediates interaction with germinal center B cells. Functions as a costimulator to promote B cell responses to antigenic stimuli; promotes B cell differentiation and proliferation. Germinal center-B (GC-B) cells differentiate into memory B-cells and plasma cells (PC) through interaction with T-cells and follicular dendritic cells (FDC). CD320 augments the proliferation of PC precursors generated by IL-10. This chain is CD320 antigen (CD320), found in Bos taurus (Bovine).